We begin with the raw amino-acid sequence, 197 residues long: Imidazoleglycerol-phosphate dehydratase (197 aa).

It belongs to the imidazoleglycerol-phosphate dehydratase family.

It localises to the cytoplasm. It catalyses the reaction D-erythro-1-(imidazol-4-yl)glycerol 3-phosphate = 3-(imidazol-4-yl)-2-oxopropyl phosphate + H2O. It participates in amino-acid biosynthesis; L-histidine biosynthesis; L-histidine from 5-phospho-alpha-D-ribose 1-diphosphate: step 6/9. The chain is Imidazoleglycerol-phosphate dehydratase from Syntrophus aciditrophicus (strain SB).